Here is a 315-residue protein sequence, read N- to C-terminus: Transaldolase (315 aa).

The active-site Schiff-base intermediate with substrate is the Lys128.

It belongs to the transaldolase family. Type 1 subfamily. Homodimer.

The protein localises to the cytoplasm. The catalysed reaction is D-sedoheptulose 7-phosphate + D-glyceraldehyde 3-phosphate = D-erythrose 4-phosphate + beta-D-fructose 6-phosphate. Its pathway is carbohydrate degradation; pentose phosphate pathway; D-glyceraldehyde 3-phosphate and beta-D-fructose 6-phosphate from D-ribose 5-phosphate and D-xylulose 5-phosphate (non-oxidative stage): step 2/3. Its function is as follows. Transaldolase is important for the balance of metabolites in the pentose-phosphate pathway. The chain is Transaldolase from Opitutus terrae (strain DSM 11246 / JCM 15787 / PB90-1).